A 344-amino-acid polypeptide reads, in one-letter code: F17d-G fimbrial adhesin (344 aa).

Residues 1–22 (MTNFYKVFLAVFILVCCNISQA) form the signal peptide. The interval 23 to 199 (AVSFIGSTEN…SLNPFTLNDT (177 aa)) is receptor-binding lectin domain. Residues 65–66 (AN), 110–111 (DT), and 139–142 (STQG) each bind a carbohydrate. A disulfide bridge connects residues Cys75 and Cys132. Residues 200–344 (VTSCRLLTPS…GISTFTFSYQ (145 aa)) form a fimbrillin-binding domain region. Residues 288 to 308 (LKFGPDSPVKGNENQWQLSTG) are disordered. Polar residues predominate over residues 299 to 308 (NENQWQLSTG).

The protein belongs to the fimbrial protein family.

It localises to the fimbrium. Its function is as follows. Essential fimbrial adhesion factor that mediates binding to N-acetylglucosamine-containing receptors in the host intestinal microvilli, leading to colonization of the intestinal tissue, and diarrhea or septicemia. Also confers adhesiveness to laminin and basement membranes. The polypeptide is F17d-G fimbrial adhesin (f17dG) (Escherichia coli).